We begin with the raw amino-acid sequence, 388 residues long: Leucine aminopeptidase 1 (388 aa).

The signal sequence occupies residues Met1–Ala19. Residues Ala20–Val88 constitute a propeptide that is removed on maturation. 2 N-linked (GlcNAc...) asparagine glycosylation sites follow: Asn106 and Asn180. Zn(2+)-binding residues include His188 and Asp207. Residue Asn232 is glycosylated (N-linked (GlcNAc...) asparagine). Positions 246 and 273 each coordinate Zn(2+). A disulfide bridge links Cys322 with Cys326. His355 is a Zn(2+) binding site.

Belongs to the peptidase M28 family. M28E subfamily. In terms of assembly, monomer. Zn(2+) serves as cofactor.

The protein localises to the secreted. In terms of biological role, extracellular aminopeptidase that allows assimilation of proteinaceous substrates. The protein is Leucine aminopeptidase 1 (lap1) of Aspergillus clavatus (strain ATCC 1007 / CBS 513.65 / DSM 816 / NCTC 3887 / NRRL 1 / QM 1276 / 107).